The primary structure comprises 224 residues: TBP-related factor (224 aa).

Residues Arg14–Gln34 form a disordered region. Positions Val17–Gln34 are enriched in low complexity. 2 consecutive repeat copies span residues Leu51–Leu127 and Leu141–Leu218.

It belongs to the TBP family. Primary spermatocytes in the adult testis and in a subset of cells in the dorsal medial region of the embryonic CNS.

It localises to the nucleus. In terms of biological role, acts as a transcription factor. Binds to the TATA box promoter element which lies close to the position of transcription initiation. May be essential for embryonic development. This is TBP-related factor (Trf) from Drosophila melanogaster (Fruit fly).